We begin with the raw amino-acid sequence, 121 residues long: Small ribosomal subunit protein uS13 (121 aa).

Residues 96-121 are disordered; that stretch reads PVRGQNTKNNARTRKGKAVAIAGKKK. A compositionally biased stretch (basic residues) spans 106–121; that stretch reads ARTRKGKAVAIAGKKK.

This sequence belongs to the universal ribosomal protein uS13 family. As to quaternary structure, part of the 30S ribosomal subunit. Forms a loose heterodimer with protein S19. Forms two bridges to the 50S subunit in the 70S ribosome.

In terms of biological role, located at the top of the head of the 30S subunit, it contacts several helices of the 16S rRNA. In the 70S ribosome it contacts the 23S rRNA (bridge B1a) and protein L5 of the 50S subunit (bridge B1b), connecting the 2 subunits; these bridges are implicated in subunit movement. Contacts the tRNAs in the A and P-sites. This chain is Small ribosomal subunit protein uS13, found in Streptococcus agalactiae serotype Ia (strain ATCC 27591 / A909 / CDC SS700).